The primary structure comprises 217 residues: ATP phosphoribosyltransferase (217 aa).

The protein belongs to the ATP phosphoribosyltransferase family. Short subfamily. Heteromultimer composed of HisG and HisZ subunits.

The protein localises to the cytoplasm. The enzyme catalyses 1-(5-phospho-beta-D-ribosyl)-ATP + diphosphate = 5-phospho-alpha-D-ribose 1-diphosphate + ATP. It functions in the pathway amino-acid biosynthesis; L-histidine biosynthesis; L-histidine from 5-phospho-alpha-D-ribose 1-diphosphate: step 1/9. Its function is as follows. Catalyzes the condensation of ATP and 5-phosphoribose 1-diphosphate to form N'-(5'-phosphoribosyl)-ATP (PR-ATP). Has a crucial role in the pathway because the rate of histidine biosynthesis seems to be controlled primarily by regulation of HisG enzymatic activity. The sequence is that of ATP phosphoribosyltransferase (hisG) from Neisseria meningitidis serogroup A / serotype 4A (strain DSM 15465 / Z2491).